Here is a 513-residue protein sequence, read N- to C-terminus: Cytochrome P450 monooxygenase asaD (513 aa).

Residues 14–34 traverse the membrane as a helical segment; it reads ILYPFLFGIFAVASLCIATLL. N-linked (GlcNAc...) asparagine glycosylation is found at Asn-258, Asn-370, Asn-431, and Asn-441. Cys-461 serves as a coordination point for heme.

This sequence belongs to the cytochrome P450 family. Heme is required as a cofactor.

The protein localises to the membrane. Its pathway is secondary metabolite biosynthesis. In terms of biological role, cytochrome P450 monooxygenase; part of the gene cluster that mediates the biosynthesis of aspergillic acid, a hydroxamic acid-containing pyrazinone with aliphatic side chains that originates from leucine (Leu) and isoleucine (Ile). Aspergillic acid has antibiotic properties and was shown to be lethal to mice. The first step in the pathway is the production of deoxyaspergillic acid via a condensation between the Ile amine and the Leu carboxylic acid, followed by a reductive release from the protein forming the dipeptide aldehyde NH(2)-Leu-Ile-CHO, which could undergo an intermolecular cyclization resulting in a dihydropyrazinone. As the NRPS asaC lacks a condensation domain, it is improbable that it is responsible for condensation of Leu and Ile. One possibility is that asaC acts on a previously condensed dipeptide and functions as a Leu-Ile reductase to yield deoxyaspergillic acid. After asaC forms deoxyaspergillic acid, the cytochrome P450 asaD oxidizes the pyrazinone to the hydroxamic acid-containing bioactive metabolite aspergillic acid. The hydroxylase/desaturase asaB can then convert aspergillic acid to hydroxyaspergillic acid. Both aspergillic acid and hydroxyaspergillic acid can form complexes with iron producing ferriaspergillin analogs. In Aspergillus flavus (strain ATCC 200026 / FGSC A1120 / IAM 13836 / NRRL 3357 / JCM 12722 / SRRC 167), this protein is Cytochrome P450 monooxygenase asaD.